We begin with the raw amino-acid sequence, 97 residues long: uncharacterized protein (97 aa).

A signal peptide spans 1-21 (MNKKFSISLLSTILAFLLVLG). Cysteine 22 carries the N-palmitoyl cysteine lipid modification. Cysteine 22 carries S-diacylglycerol cysteine lipidation.

The protein to B.burgdorferi BBD15.

The protein localises to the cell membrane. This is an uncharacterized protein from Borreliella burgdorferi (strain ATCC 35210 / DSM 4680 / CIP 102532 / B31) (Borrelia burgdorferi).